The primary structure comprises 66 residues: Nigrocin-2GRa (66 aa).

The N-terminal stretch at 1–22 (MFTLKKSQLLLFFPGTINLSLC) is a signal peptide. Residues 23-45 (QDETNAEEERRDEEVAKMEEIKR) constitute a propeptide that is removed on maturation. Cysteine 60 and cysteine 66 are oxidised to a cystine.

In terms of tissue distribution, expressed by the skin glands.

Its subcellular location is the secreted. Functionally, antimicrobial peptide active at least against the Gram-positive bacterium S.aureus but with otherwise unclear activity spectrum. Lacks hemolytic activity against rabbit or human erythrocytes. The sequence is that of Nigrocin-2GRa from Odorrana grahami (Yunnanfu frog).